The following is an 88-amino-acid chain: Small ribosomal subunit protein bS18B (88 aa).

The protein belongs to the bacterial ribosomal protein bS18 family. In terms of assembly, part of the 30S ribosomal subunit. Forms a tight heterodimer with protein bS6.

Binds as a heterodimer with protein bS6 to the central domain of the 16S rRNA, where it helps stabilize the platform of the 30S subunit. The sequence is that of Small ribosomal subunit protein bS18B from Roseiflexus castenholzii (strain DSM 13941 / HLO8).